The primary structure comprises 369 residues: Queuine tRNA-ribosyltransferase (369 aa).

Asp-89 functions as the Proton acceptor in the catalytic mechanism. Substrate is bound by residues 89–93 (DSGGF), Asp-142, Gln-184, and Gly-211. The segment at 242 to 248 (GGGSPEL) is RNA binding. Asp-261 serves as the catalytic Nucleophile. The interval 266–270 (TRIAR) is RNA binding; important for wobble base 34 recognition. 4 residues coordinate Zn(2+): Cys-299, Cys-301, Cys-304, and His-330.

It belongs to the queuine tRNA-ribosyltransferase family. Homodimer. Within each dimer, one monomer is responsible for RNA recognition and catalysis, while the other monomer binds to the replacement base PreQ1. Zn(2+) is required as a cofactor.

It catalyses the reaction 7-aminomethyl-7-carbaguanine + guanosine(34) in tRNA = 7-aminomethyl-7-carbaguanosine(34) in tRNA + guanine. Its pathway is tRNA modification; tRNA-queuosine biosynthesis. Catalyzes the base-exchange of a guanine (G) residue with the queuine precursor 7-aminomethyl-7-deazaguanine (PreQ1) at position 34 (anticodon wobble position) in tRNAs with GU(N) anticodons (tRNA-Asp, -Asn, -His and -Tyr). Catalysis occurs through a double-displacement mechanism. The nucleophile active site attacks the C1' of nucleotide 34 to detach the guanine base from the RNA, forming a covalent enzyme-RNA intermediate. The proton acceptor active site deprotonates the incoming PreQ1, allowing a nucleophilic attack on the C1' of the ribose to form the product. After dissociation, two additional enzymatic reactions on the tRNA convert PreQ1 to queuine (Q), resulting in the hypermodified nucleoside queuosine (7-(((4,5-cis-dihydroxy-2-cyclopenten-1-yl)amino)methyl)-7-deazaguanosine). The chain is Queuine tRNA-ribosyltransferase from Thermotoga maritima (strain ATCC 43589 / DSM 3109 / JCM 10099 / NBRC 100826 / MSB8).